The primary structure comprises 484 residues: Acetaldehyde dehydrogenase (acetylating) (484 aa).

The protein belongs to the aldehyde dehydrogenase family.

The enzyme catalyses acetaldehyde + NAD(+) + CoA = acetyl-CoA + NADH + H(+). The protein operates within organosulfur degradation; alkanesulfonate degradation. Its function is as follows. Involved in an anaerobic respiration pathway that converts the sulfonate taurine (2-aminoethanesulfonate) to ammonia, acetate and sulfide. Catalyzes the oxidation of acetaldehyde to acetyl-CoA in the presence of CoASH and NAD(+). Highly prefers NAD(+) over NADP(+). This chain is Acetaldehyde dehydrogenase (acetylating), found in Bilophila wadsworthia (strain 3_1_6).